A 172-amino-acid polypeptide reads, in one-letter code: Ribosome maturation factor RimM (172 aa).

In terms of domain architecture, PRC barrel spans 96–168 (DGEFYYHEII…RVDVELLEGL (73 aa)).

This sequence belongs to the RimM family. Binds ribosomal protein uS19.

The protein localises to the cytoplasm. Its function is as follows. An accessory protein needed during the final step in the assembly of 30S ribosomal subunit, possibly for assembly of the head region. Essential for efficient processing of 16S rRNA. May be needed both before and after RbfA during the maturation of 16S rRNA. It has affinity for free ribosomal 30S subunits but not for 70S ribosomes. In Streptococcus suis (strain 05ZYH33), this protein is Ribosome maturation factor RimM.